Here is a 379-residue protein sequence, read N- to C-terminus: MTIIRKSHPLSKIVNHAFIDLPTPPNISGWWNFGSLLGMCLVLQIFTGLFLAMHYTSDTLTAFSSVTHICRDVNHGWLIRYMHANGASLFFICLYIHIGRGIYYGSYLYKETWNIGILLLFLTMATAFVGYVLPXGXMSFWGATVITNLLSAIPYIGQDLVEWIWGGFSVDKATLTRFFAFHFILPFIIAALATVHLLFLHETGSNNPLGIPSDXAKIPFHPYYTTKDFLGALIXIMFFMTLVLYFPXXLGDPDNYTPANPLNTPPHIKPEWYFLFAYAILRSIPNKLGGVVALILSILVLALLPYIHTSNQRSMMFRPISQFLFWTLVSDLLLLTWIGGQPVEPPFIIIGQTASXMYFTIILIXMXLAGLIXNKXLKW.

A run of 4 helical transmembrane segments spans residues 33 to 53 (FGSL…FLAM), 77 to 98 (WLIR…YIHI), 113 to 133 (WNIG…GYVL), and 178 to 198 (FFAF…VHLL). Heme b-binding residues include His-83 and His-97. Heme b-binding residues include His-182 and His-196. A ubiquinone is bound at residue His-201. Transmembrane regions (helical) follow at residues 226–246 (TKDF…VLYF), 288–308 (LGGV…PYIH), 320–340 (ISQF…WIGG), and 347–367 (FIII…IXMX).

This sequence belongs to the cytochrome b family. As to quaternary structure, the cytochrome bc1 complex contains 11 subunits: 3 respiratory subunits (MT-CYB, CYC1 and UQCRFS1), 2 core proteins (UQCRC1 and UQCRC2) and 6 low-molecular weight proteins (UQCRH/QCR6, UQCRB/QCR7, UQCRQ/QCR8, UQCR10/QCR9, UQCR11/QCR10 and a cleavage product of UQCRFS1). This cytochrome bc1 complex then forms a dimer. The cofactor is heme b.

The protein localises to the mitochondrion inner membrane. Component of the ubiquinol-cytochrome c reductase complex (complex III or cytochrome b-c1 complex) that is part of the mitochondrial respiratory chain. The b-c1 complex mediates electron transfer from ubiquinol to cytochrome c. Contributes to the generation of a proton gradient across the mitochondrial membrane that is then used for ATP synthesis. This chain is Cytochrome b (MT-CYB), found in Thomomys umbrinus (Southern pocket gopher).